The primary structure comprises 70 residues: MRTRIREFRAKYGMTQEELAKKVGVRRETIVFLEKGKYNPSLRLAYKIARVFNARIEDLFIFDDEELWGK.

The region spanning 5–59 is the HTH cro/C1-type domain; that stretch reads IREFRAKYGMTQEELAKKVGVRRETIVFLEKGKYNPSLRLAYKIARVFNARIEDL. Positions 16–35 form a DNA-binding region, H-T-H motif; that stretch reads QEELAKKVGVRRETIVFLEK.

This is an uncharacterized protein from Archaeoglobus fulgidus (strain ATCC 49558 / DSM 4304 / JCM 9628 / NBRC 100126 / VC-16).